We begin with the raw amino-acid sequence, 200 residues long: Somatotropin (200 aa).

The N-terminal stretch at 1–22 (MARVLVVLSVVVASLFFSQGAT) is a signal peptide. H38 is a binding site for Zn(2+). The cysteines at positions 71 and 173 are disulfide-linked. Position 182 (E182) interacts with Zn(2+). An intrachain disulfide couples C190 to C198.

The protein belongs to the somatotropin/prolactin family.

The protein resides in the secreted. Functionally, growth hormone plays an important role in growth control and is involved in the regulation of several anabolic processes. Implicated as an osmoregulatory substance important for seawater adaptation. The chain is Somatotropin (gh) from Heteropneustes fossilis (Stinging catfish).